A 347-amino-acid polypeptide reads, in one-letter code: Chaperone protein DnaJ 1 (347 aa).

Positions 5 to 75 (DPHSLLGLSP…PAAAPHDAQA (71 aa)) constitute a J domain. The span at 68–77 (AAPHDAQAAD) shows a compositional bias: low complexity. Residues 68 to 91 (AAPHDAQAADARPEPPPEAPPRGA) form a disordered region. The segment at 107-181 (GGEKAFTIAD…CHGSGQARAA (75 aa)) adopts a CR-type zinc-finger fold. 8 residues coordinate Zn(2+): C120, C123, C137, C140, C155, C158, C169, and C172. CXXCXGXG motif repeat units lie at residues 120–127 (CGACGGSG), 137–144 (CATCHGSG), 155–162 (CADCAGRG), and 169–176 (CGACHGSG).

The protein belongs to the DnaJ family. Homodimer. Zn(2+) is required as a cofactor.

Its subcellular location is the cytoplasm. Its function is as follows. Participates actively in the response to hyperosmotic and heat shock by preventing the aggregation of stress-denatured proteins and by disaggregating proteins, also in an autonomous, DnaK-independent fashion. Unfolded proteins bind initially to DnaJ; upon interaction with the DnaJ-bound protein, DnaK hydrolyzes its bound ATP, resulting in the formation of a stable complex. GrpE releases ADP from DnaK; ATP binding to DnaK triggers the release of the substrate protein, thus completing the reaction cycle. Several rounds of ATP-dependent interactions between DnaJ, DnaK and GrpE are required for fully efficient folding. Also involved, together with DnaK and GrpE, in the DNA replication of plasmids through activation of initiation proteins. The chain is Chaperone protein DnaJ 1 from Aromatoleum aromaticum (strain DSM 19018 / LMG 30748 / EbN1) (Azoarcus sp. (strain EbN1)).